Consider the following 262-residue polypeptide: 4-hydroxy-2-oxo-heptane-1,7-dioate aldolase (262 aa).

His45 functions as the Proton acceptor in the catalytic mechanism. Substrate is bound at residue Gln147. Residue Glu149 participates in a divalent metal cation binding. Substrate is bound by residues Ala174 and Asp175. Position 175 (Asp175) interacts with a divalent metal cation.

This sequence belongs to the HpcH/HpaI aldolase family. As to quaternary structure, homohexamer; trimer of dimers. Requires a divalent metal cation as cofactor.

The enzyme catalyses 4-hydroxy-2-oxoheptanedioate = succinate semialdehyde + pyruvate. It functions in the pathway aromatic compound metabolism; 4-hydroxyphenylacetate degradation; pyruvate and succinate semialdehyde from 4-hydroxyphenylacetate: step 7/7. Functionally, catalyzes the reversible retro-aldol cleavage of 4-hydroxy-2-ketoheptane-1,7-dioate (HKHD) to pyruvate and succinic semialdehyde. The chain is 4-hydroxy-2-oxo-heptane-1,7-dioate aldolase from Shigella boydii serotype 18 (strain CDC 3083-94 / BS512).